Here is a 77-residue protein sequence, read N- to C-terminus: Translational regulator CsrA (77 aa).

The protein belongs to the CsrA/RsmA family. In terms of assembly, homodimer; the beta-strands of each monomer intercalate to form a hydrophobic core, while the alpha-helices form wings that extend away from the core.

The protein resides in the cytoplasm. In terms of biological role, a translational regulator that binds mRNA to regulate translation initiation and/or mRNA stability. Usually binds in the 5'-UTR at or near the Shine-Dalgarno sequence preventing ribosome-binding, thus repressing translation. Its main target seems to be the major flagellin gene, while its function is anatagonized by FliW. The sequence is that of Translational regulator CsrA from Desulfitobacterium hafniense (strain DSM 10664 / DCB-2).